Reading from the N-terminus, the 132-residue chain is Large ribosomal subunit protein bL12 (132 aa).

Residues 112-132 (KEAADKAKTQLEGAGGTINLK) are disordered.

This sequence belongs to the bacterial ribosomal protein bL12 family. Homodimer. Part of the ribosomal stalk of the 50S ribosomal subunit. Forms a multimeric L10(L12)X complex, where L10 forms an elongated spine to which 2 to 4 L12 dimers bind in a sequential fashion. Binds GTP-bound translation factors.

Forms part of the ribosomal stalk which helps the ribosome interact with GTP-bound translation factors. Is thus essential for accurate translation. This chain is Large ribosomal subunit protein bL12, found in Leifsonia xyli subsp. xyli (strain CTCB07).